A 336-amino-acid polypeptide reads, in one-letter code: Glyoxylate reductase (336 aa).

NADP(+) contacts are provided by residues 158–161 (FGRI), 180–182 (SRT), and 239–241 (IAR). Catalysis depends on residues arginine 241 and glutamate 270. Catalysis depends on histidine 288, which acts as the Proton donor. An NADP(+)-binding site is contributed by 288–290 (HIG).

The protein belongs to the D-isomer specific 2-hydroxyacid dehydrogenase family. GyaR subfamily. In terms of assembly, homodimer.

It is found in the cytoplasm. It carries out the reaction glycolate + NAD(+) = glyoxylate + NADH + H(+). This chain is Glyoxylate reductase, found in Pyrococcus furiosus (strain ATCC 43587 / DSM 3638 / JCM 8422 / Vc1).